Here is a 960-residue protein sequence, read N- to C-terminus: Chromo domain-containing protein 1 (960 aa).

The Chromo domain maps to 22 to 74 (YEVEDILADRVNKNGINEYYIKWAGYDWYDNTWEPEQNLFGAEKVLKKWKKRK).

As to quaternary structure, ago1, chp1 and tas3 interact to form the core of the RNA-induced transcriptional silencing (RITS) complex. The RITS complex interacts with the RDRC complex via interaction between ago1 and hrr1. Clr4 has a role in mediating this interaction. Interacts with dri1.

It is found in the nucleus. Its subcellular location is the cytoplasm. It localises to the cytoskeleton. The protein localises to the microtubule organizing center. The protein resides in the spindle pole body. Its function is as follows. Component of the kinetochore which plays a role in stabilizing microtubules and so allowing accurate chromosome segregation. Has a role in the RNA interference (RNAi) pathway which is important for heterochromatin formation and accurate chromosome segregation. A member of the RNA-induced transcriptional silencing (RITS) complex which is involved in the biosynthesis of dsRNA from primer siRNAs provided by the RNA-directed RNA polymerase (RDRC) complex. In Schizosaccharomyces pombe (strain 972 / ATCC 24843) (Fission yeast), this protein is Chromo domain-containing protein 1.